Consider the following 240-residue polypeptide: Orotidine 5'-phosphate decarboxylase (240 aa).

Substrate contacts are provided by residues aspartate 16, lysine 37, 64–73 (DLKFHDIPTT), threonine 128, arginine 190, glutamine 199, glycine 219, and arginine 220. Residue lysine 66 is the Proton donor of the active site.

It belongs to the OMP decarboxylase family. Type 1 subfamily. Homodimer.

The enzyme catalyses orotidine 5'-phosphate + H(+) = UMP + CO2. Its pathway is pyrimidine metabolism; UMP biosynthesis via de novo pathway; UMP from orotate: step 2/2. Its function is as follows. Catalyzes the decarboxylation of orotidine 5'-monophosphate (OMP) to uridine 5'-monophosphate (UMP). The chain is Orotidine 5'-phosphate decarboxylase from Prochlorococcus marinus (strain SARG / CCMP1375 / SS120).